A 298-amino-acid polypeptide reads, in one-letter code: Isochorismatase domain-containing protein 1 (298 aa).

Y160 carries the phosphotyrosine modification. At K279 the chain carries N6-succinyllysine.

It belongs to the isochorismatase family.

This is Isochorismatase domain-containing protein 1 (ISOC1) from Homo sapiens (Human).